We begin with the raw amino-acid sequence, 159 residues long: Trafficking protein particle complex subunit 6A (159 aa).

Phosphoserine is present on serine 33.

Belongs to the TRAPP small subunits family. BET3 subfamily. Part of the multisubunit transport protein particle (TRAPP) complex. Heterodimer with TRAPPC3. The heterodimer TRAPPC3-TRAPPC6A interacts with TRAPPC2L. Interacts with TRAPPC2L.

Its subcellular location is the golgi apparatus. The protein localises to the cis-Golgi network. The protein resides in the endoplasmic reticulum. Functionally, may play a role in vesicular transport during the biogenesis of melanosomes. This chain is Trafficking protein particle complex subunit 6A, found in Bos taurus (Bovine).